The sequence spans 310 residues: Olfactory receptor 2A1/2A42 (310 aa).

At 1 to 24 (MGENQTMVTEFLLLGFLLGPRIQM) the chain is on the extracellular side. Asparagine 4 carries an N-linked (GlcNAc...) asparagine glycan. Residues 25–48 (LLFGLFSLFYIFTLLGNGAILGLI) traverse the membrane as a helical segment. Residues 49–56 (SLDSRLHT) are Cytoplasmic-facing. Residues 57–78 (PMYFFLSHLAVVDIAYTRNTVP) form a helical membrane-spanning segment. Topologically, residues 79-99 (QMLANLLHPAKPISFAGCMTQ) are extracellular. A disulfide bond links cysteine 96 and cysteine 188. The chain crosses the membrane as a helical span at residues 100 to 119 (TFLCLSFGHSECLLLVLMSY). Residues 120–138 (DRYVAICHPLRYSVIMTWR) lie on the Cytoplasmic side of the membrane. Residues 139 to 157 (VCITLAVTSWTCGSLLALA) traverse the membrane as a helical segment. Over 158 to 195 (HVVLILRLPFSGPHEINHFFCEILSVLRLACADTWLNQ) the chain is Extracellular. A helical transmembrane segment spans residues 196–218 (VVIFAACVFFLVGPPSLVLVSYS). Over 219 to 235 (HILAAILRIQSGEGRRK) the chain is Cytoplasmic. A helical membrane pass occupies residues 236–258 (AFSTCSSHLCVVGLFFGSAIIMY). Topologically, residues 259–271 (MAPKSRHPEEQQK) are extracellular. Residues 272-291 (VFFLFYSFFNPTLNPLIYSL) form a helical membrane-spanning segment. Topologically, residues 292–310 (RNGEVKGALRRALGKESHS) are cytoplasmic.

It belongs to the G-protein coupled receptor 1 family.

Its subcellular location is the cell membrane. Functionally, odorant receptor. The protein is Olfactory receptor 2A1/2A42 (OR2A1) of Homo sapiens (Human).